Reading from the N-terminus, the 85-residue chain is MAHKKGQGSTQNNRDSIGRRLGVKKFGGEFVRAGNIIIRQRGTATHAGNNVGIGTDHTIFALIDGVVKFERFDKTRKQVSVYPLS.

This sequence belongs to the bacterial ribosomal protein bL27 family.

This Campylobacter hominis (strain ATCC BAA-381 / DSM 21671 / CCUG 45161 / LMG 19568 / NCTC 13146 / CH001A) protein is Large ribosomal subunit protein bL27.